We begin with the raw amino-acid sequence, 155 residues long: 6,7-dimethyl-8-ribityllumazine synthase (155 aa).

Residues Trp-22, 56 to 58, and 80 to 82 contribute to the 5-amino-6-(D-ribitylamino)uracil site; these read SFE and AVI. 85–86 lines the (2S)-2-hydroxy-3-oxobutyl phosphate pocket; it reads AT. His-88 acts as the Proton donor in catalysis. Phe-113 serves as a coordination point for 5-amino-6-(D-ribitylamino)uracil. Arg-127 is a (2S)-2-hydroxy-3-oxobutyl phosphate binding site.

Belongs to the DMRL synthase family.

It carries out the reaction (2S)-2-hydroxy-3-oxobutyl phosphate + 5-amino-6-(D-ribitylamino)uracil = 6,7-dimethyl-8-(1-D-ribityl)lumazine + phosphate + 2 H2O + H(+). It participates in cofactor biosynthesis; riboflavin biosynthesis; riboflavin from 2-hydroxy-3-oxobutyl phosphate and 5-amino-6-(D-ribitylamino)uracil: step 1/2. Functionally, catalyzes the formation of 6,7-dimethyl-8-ribityllumazine by condensation of 5-amino-6-(D-ribitylamino)uracil with 3,4-dihydroxy-2-butanone 4-phosphate. This is the penultimate step in the biosynthesis of riboflavin. This is 6,7-dimethyl-8-ribityllumazine synthase from Chloroflexus aurantiacus (strain ATCC 29364 / DSM 637 / Y-400-fl).